The primary structure comprises 322 residues: Sideroflexin-1 (322 aa).

Residue Ser2 is modified to N-acetylserine. Residues 2–102 (SGEVPPNINI…MSAQVPMNMT (101 aa)) lie on the Mitochondrial matrix side of the membrane. A helical transmembrane segment spans residues 103 to 120 (ITGCMMTFYRTTPAVLFW). Residues 121–146 (QWINQSFNAVVNYTNRSGDAPLTVNE) lie on the Mitochondrial intermembrane side of the membrane. A helical membrane pass occupies residues 147 to 167 (LGTAYVSATTGAVATALGLNA). Residues 168-174 (LTKRVSP) lie on the Mitochondrial matrix side of the membrane. The chain crosses the membrane as a helical span at residues 175–195 (LIGRFVPFAAVAAANCINIPL). At 196–228 (MRQRELKVGIPVTDENGTRLGESTNAAKQAITQ) the chain is on the mitochondrial intermembrane side. Residues 229-249 (VVISRILMAAPGMAIPPFIMN) form a helical membrane-spanning segment. Topologically, residues 250–266 (TLEKKAFLKRFPWMSAP) are mitochondrial matrix. The helical transmembrane segment at 267–287 (IQVTLVGFCLVFATPLCCALF) threads the bilayer. At 288–322 (PQKSSMSVTSLEDELQASIQRTHPEIRRVYFNKGL) the chain is on the mitochondrial intermembrane side.

Belongs to the sideroflexin family. Widely expressed, with highest expression in kidney and liver.

The protein resides in the mitochondrion inner membrane. It catalyses the reaction L-serine(in) = L-serine(out). The catalysed reaction is L-alanine(in) = L-alanine(out). It carries out the reaction L-cysteine(in) = L-cysteine(out). Amino acid transporter importing serine, an essential substrate of the mitochondrial branch of the one-carbon pathway, into mitochondria. Mitochondrial serine is then converted to glycine and formate, which exits to the cytosol where it is used to generate the charged folates that serve as one-carbon donors. May also transport other amino acids including alanine and cysteine. The polypeptide is Sideroflexin-1 (Mus musculus (Mouse)).